The primary structure comprises 281 residues: Large ribosomal subunit protein uL2 (281 aa).

The interval 223-255 (TVRGSVMNPNDHPHGGGEGRAPIGRKSPVTPWG) is disordered.

This sequence belongs to the universal ribosomal protein uL2 family. Part of the 50S ribosomal subunit. Forms a bridge to the 30S subunit in the 70S ribosome.

Functionally, one of the primary rRNA binding proteins. Required for association of the 30S and 50S subunits to form the 70S ribosome, for tRNA binding and peptide bond formation. It has been suggested to have peptidyltransferase activity; this is somewhat controversial. Makes several contacts with the 16S rRNA in the 70S ribosome. This Mycoplasma capricolum subsp. capricolum (strain California kid / ATCC 27343 / NCTC 10154) protein is Large ribosomal subunit protein uL2.